Reading from the N-terminus, the 151-residue chain is 3-hydroxyacyl-[acyl-carrier-protein] dehydratase FabZ (151 aa).

Residue histidine 49 is part of the active site.

This sequence belongs to the thioester dehydratase family. FabZ subfamily.

It is found in the cytoplasm. The enzyme catalyses a (3R)-hydroxyacyl-[ACP] = a (2E)-enoyl-[ACP] + H2O. Involved in unsaturated fatty acids biosynthesis. Catalyzes the dehydration of short chain beta-hydroxyacyl-ACPs and long chain saturated and unsaturated beta-hydroxyacyl-ACPs. The chain is 3-hydroxyacyl-[acyl-carrier-protein] dehydratase FabZ from Bordetella petrii (strain ATCC BAA-461 / DSM 12804 / CCUG 43448).